Reading from the N-terminus, the 133-residue chain is UPF0292 protein TGAM_1777 (133 aa).

The Toprim domain maps to 20–100 (EGALIVEGLR…RVDVETRREL (81 aa)). Mg(2+) is bound by residues glutamate 26, aspartate 69, and aspartate 71.

The protein belongs to the UPF0292 family. The cofactor is Mg(2+).

In Thermococcus gammatolerans (strain DSM 15229 / JCM 11827 / EJ3), this protein is UPF0292 protein TGAM_1777.